The sequence spans 454 residues: Sensor histidine kinase YkoH (454 aa).

Over Met-1–Ser-12 the chain is Cytoplasmic. The helical transmembrane segment at Ile-13–Ala-33 threads the bilayer. The Extracellular segment spans residues Leu-34–Lys-153. A helical membrane pass occupies residues Ile-154–Leu-174. The Cytoplasmic segment spans residues Ala-175–Arg-454. Positions Arg-176 to Asp-230 constitute an HAMP domain. The Histidine kinase domain occupies Asp-238 to Asn-450. His-241 carries the post-translational modification Phosphohistidine; by autocatalysis.

The protein resides in the cell membrane. It catalyses the reaction ATP + protein L-histidine = ADP + protein N-phospho-L-histidine.. Its function is as follows. Probable member of the two-component regulatory system YkoH/YkoG. Potentially phosphorylates YkoG. The chain is Sensor histidine kinase YkoH (ykoH) from Bacillus subtilis (strain 168).